A 292-amino-acid chain; its full sequence is Carbapenem-hydrolyzing beta-lactamase transcriptional activator (292 aa).

The HTH lysR-type domain maps to 5–62 (IPLNALRAFEASARYLNFTKAGLELHVSQAAVSQHVRTLEAILGVNLFKRLPRGLQLT). Positions 22 to 41 (FTKAGLELHVSQAAVSQHVR) form a DNA-binding region, H-T-H motif.

It belongs to the LysR transcriptional regulatory family.

In terms of biological role, this protein is a positive regulator of gene expression of carbapenem-hydrolyzing beta-lactamase (smeA). Seems to also be a repressor of its own transcription. This chain is Carbapenem-hydrolyzing beta-lactamase transcriptional activator (smeR), found in Serratia marcescens.